A 195-amino-acid polypeptide reads, in one-letter code: PAP fimbrial minor pilin protein (195 aa).

Residues 1–22 (MRLRFSVPLFFFGCVFVHGVFA) form the signal peptide. A disulfide bond links Cys58 and Cys97.

Belongs to the fimbrial protein family.

It is found in the secreted. Its subcellular location is the fimbrium. Functionally, fimbriae (also called pili), polar filaments radiating from the surface of the bacterium to a length of 0.5-1.5 micrometers and numbering 100-300 per cell, enable bacteria to colonize the epithelium of specific host organs. In terms of biological role, papH seems to anchor the pilus to the bacterial cell. In addition the stoichiometric relationship between PapH and PapA determines the pilus length. This Escherichia coli protein is PAP fimbrial minor pilin protein (papH).